Reading from the N-terminus, the 424-residue chain is Dihydroorotase (424 aa).

H61 and H63 together coordinate Zn(2+). Substrate is bound by residues 63–65 (HLR) and N95. Residues D153, H180, and H233 each contribute to the Zn(2+) site. N279 lines the substrate pocket. Zn(2+) is bound at residue D306. Residue D306 is part of the active site. Substrate is bound at residue H310.

This sequence belongs to the metallo-dependent hydrolases superfamily. DHOase family. Class I DHOase subfamily. The cofactor is Zn(2+).

The catalysed reaction is (S)-dihydroorotate + H2O = N-carbamoyl-L-aspartate + H(+). Its pathway is pyrimidine metabolism; UMP biosynthesis via de novo pathway; (S)-dihydroorotate from bicarbonate: step 3/3. Its function is as follows. Catalyzes the reversible cyclization of carbamoyl aspartate to dihydroorotate. The chain is Dihydroorotase from Pelobacter propionicus (strain DSM 2379 / NBRC 103807 / OttBd1).